The sequence spans 578 residues: Putative fatty-acid--CoA ligase fadD21 (578 aa).

Belongs to the ATP-dependent AMP-binding enzyme family.

This is Putative fatty-acid--CoA ligase fadD21 (fadD21) from Mycobacterium bovis (strain ATCC BAA-935 / AF2122/97).